The chain runs to 207 residues: Redox-sensing transcriptional repressor Rex (207 aa).

Positions 15–54 (LYYRCLNRLYEEGIEYVASKDIAERLGIKSSQVRKDLSYF) form a DNA-binding region, H-T-H motif. Residue 89–94 (GAGNIG) participates in NAD(+) binding.

The protein belongs to the transcriptional regulatory Rex family. In terms of assembly, homodimer.

The protein localises to the cytoplasm. Its function is as follows. Modulates transcription in response to changes in cellular NADH/NAD(+) redox state. In Thermosipho africanus (strain TCF52B), this protein is Redox-sensing transcriptional repressor Rex.